The primary structure comprises 216 residues: Probable nicotinate-nucleotide adenylyltransferase (216 aa).

Belongs to the NadD family.

The enzyme catalyses nicotinate beta-D-ribonucleotide + ATP + H(+) = deamido-NAD(+) + diphosphate. The protein operates within cofactor biosynthesis; NAD(+) biosynthesis; deamido-NAD(+) from nicotinate D-ribonucleotide: step 1/1. Catalyzes the reversible adenylation of nicotinate mononucleotide (NaMN) to nicotinic acid adenine dinucleotide (NaAD). This is Probable nicotinate-nucleotide adenylyltransferase from Shewanella baltica (strain OS195).